A 35-amino-acid polypeptide reads, in one-letter code: MEALVYTFLLVSTLGIIFFAIFFREPPKVPTKKTK.

Residues 3–23 traverse the membrane as a helical segment; the sequence is ALVYTFLLVSTLGIIFFAIFF.

Belongs to the PsbT family. In terms of assembly, PSII is composed of 1 copy each of membrane proteins PsbA, PsbB, PsbC, PsbD, PsbE, PsbF, PsbH, PsbI, PsbJ, PsbK, PsbL, PsbM, PsbT, PsbY, PsbZ, Psb30/Ycf12, at least 3 peripheral proteins of the oxygen-evolving complex and a large number of cofactors. It forms dimeric complexes.

Its subcellular location is the plastid. The protein resides in the chloroplast thylakoid membrane. Its function is as follows. Found at the monomer-monomer interface of the photosystem II (PS II) dimer, plays a role in assembly and dimerization of PSII. PSII is a light-driven water plastoquinone oxidoreductase, using light energy to abstract electrons from H(2)O, generating a proton gradient subsequently used for ATP formation. This is Photosystem II reaction center protein T from Citrus sinensis (Sweet orange).